Here is a 102-residue protein sequence, read N- to C-terminus: Omega-hexatoxin-Hi2b (102 aa).

The signal sequence occupies residues methionine 1–glycine 23. The propeptide occupies lysine 24 to arginine 56. 3 cysteine pairs are disulfide-bonded: cysteine 61/cysteine 75, cysteine 68/cysteine 81, and cysteine 74/cysteine 86. Leucine 98 is subject to Leucine amide. The propeptide occupies arginine 100 to leucine 102.

This sequence belongs to the neurotoxin 15 family. 02 (omega-actx) subfamily. In terms of tissue distribution, expressed by the venom gland.

It is found in the secreted. Functionally, potent inhibitor of insect, but not mammalian, voltage-gated calcium channels (Cav). This Hadronyche infensa (Fraser island funnel-web spider) protein is Omega-hexatoxin-Hi2b.